Reading from the N-terminus, the 224-residue chain is Cytidylate kinase (224 aa).

Position 11-19 (11-19) interacts with ATP; that stretch reads GPAGAGKST.

This sequence belongs to the cytidylate kinase family. Type 1 subfamily.

The protein localises to the cytoplasm. It catalyses the reaction CMP + ATP = CDP + ADP. The enzyme catalyses dCMP + ATP = dCDP + ADP. The protein is Cytidylate kinase of Exiguobacterium sp. (strain ATCC BAA-1283 / AT1b).